We begin with the raw amino-acid sequence, 183 residues long: Streptavidin (183 aa).

The signal sequence occupies residues 1 to 24; sequence MRKIVVAAIAVSLTTVSITASASA. The Avidin-like domain maps to 37–159; sequence AEAGITGTWY…GHDTFTKVKP (123 aa). Biotin contacts are provided by tyrosine 67 and tyrosine 78. A Cell attachment site; atypical motif is present at residues 83–85; sequence RYD. Tryptophan 116, tryptophan 132, and tryptophan 144 together coordinate biotin.

The protein belongs to the avidin/streptavidin family. As to quaternary structure, homotetramer.

The protein resides in the secreted. Functionally, the biological function of streptavidin is not known. Forms a strong non-covalent specific complex with biotin (one molecule of biotin per subunit of streptavidin). The sequence is that of Streptavidin from Streptomyces avidinii.